Here is a 146-residue protein sequence, read N- to C-terminus: Gonadotropin subunit beta-2 (146 aa).

A signal peptide spans 1–28 (TGTPVKILVVRNILLLLFCLVVLLVFAQ). Intrachain disulfides connect cysteine 35–cysteine 83, cysteine 49–cysteine 98, cysteine 52–cysteine 136, cysteine 60–cysteine 114, cysteine 64–cysteine 116, and cysteine 119–cysteine 126. A glycan (N-linked (GlcNAc...) asparagine) is linked at asparagine 39.

This sequence belongs to the glycoprotein hormones subunit beta family. In terms of assembly, heterodimer of an alpha and a beta chain.

The protein resides in the secreted. Functionally, involved in gametogenesis and steroidogenesis. This is Gonadotropin subunit beta-2 (cgbb) from Ctenopharyngodon idella (Grass carp).